Consider the following 259-residue polypeptide: Protein unc-50 homolog A (259 aa).

The Cytoplasmic segment spans residues 1–82 (MLPTTSVSPR…TKDQWARDDP (82 aa)). Residues 83–103 (AFLVLLSIWLCVSTVGFGFVL) form a helical membrane-spanning segment. Over 104-112 (DMSFFETFK) the chain is Lumenal. The chain crosses the membrane as a helical span at residues 113 to 133 (LLLWVVFIDCVGVGLLIATLM). The Cytoplasmic portion of the chain corresponds to 134-158 (WFVSNKYMVKRQGKDYDVEWGYTFD). A helical transmembrane segment spans residues 159 to 179 (VHLNAFYPLLVILHFIQLFFI). The Lumenal portion of the chain corresponds to 180–181 (NH). A helical transmembrane segment spans residues 182-202 (VILSGWFIGYFVGNTIWLIAI). Residues 203 to 222 (GYYIYITFLGYSALPFLKNT) are Cytoplasmic-facing. Residues 223–243 (VILLYPFAALALLYVLSLALG) form a helical membrane-spanning segment. At 244-259 (WNFTEKLCLFYKYRVR) the chain is on the lumenal side.

It belongs to the unc-50 family.

It is found in the nucleus inner membrane. The protein localises to the golgi apparatus membrane. Involved in the cell surface expression of neuronal nicotinic receptors. Binds RNA. The sequence is that of Protein unc-50 homolog A (unc50-a) from Xenopus laevis (African clawed frog).